Here is a 250-residue protein sequence, read N- to C-terminus: 5'-nucleotidase SurE (250 aa).

Residues Asp9, Asp10, Ser40, and Asn92 each coordinate a divalent metal cation.

The protein belongs to the SurE nucleotidase family. Requires a divalent metal cation as cofactor.

Its subcellular location is the cytoplasm. It catalyses the reaction a ribonucleoside 5'-phosphate + H2O = a ribonucleoside + phosphate. Functionally, nucleotidase that shows phosphatase activity on nucleoside 5'-monophosphates. The polypeptide is 5'-nucleotidase SurE (Idiomarina loihiensis (strain ATCC BAA-735 / DSM 15497 / L2-TR)).